Reading from the N-terminus, the 262-residue chain is MGSIRGNIEEPISQSLTRQNSLYSLKLHEVQTHLGSSGKPLGSMNLDELLKTVLPPAEEGLVRQGSLTLPRDLSKKTVDEVWRDIQQDKNGNGTSTTTTHKQPTLGEITLEDLLLRAGVVTETVVPQENVVNIASNGQWVEYHHQPQQQQGFMTYPVCEMQDMVMMGGLSDTPQAPGRKRVAGEIVEKTVERRQKRMIKNRESAARSRARKQAYTHELEIKVSRLEEENEKLRRLKEVEKILPSEPPPDPKWKLRRTNSASL.

3 positions are modified to phosphoserine: Ser-21, Ser-43, and Ser-66. Residue Thr-104 is modified to Phosphothreonine. One can recognise a bZIP domain in the interval Val-190–Lys-253. The tract at residues Arg-192–Lys-211 is basic motif. The segment at Leu-218 to Leu-232 is leucine-zipper. Residues Glu-239–Trp-252 show a composition bias toward basic and acidic residues. The disordered stretch occupies residues Glu-239 to Leu-262.

This sequence belongs to the bZIP family. ABI5 subfamily. DNA-binding heterodimer with ABI5/DPBF1, DPBF2 or AREB3/DPBF3. Interacts with the AFP proteins AFP2, AFP3 and AFP4. Predominantly expressed in seeds.

It is found in the nucleus. Its function is as follows. Binds to the embryo specification element and the ABA-responsive element (ABRE) of the Dc3 gene promoter and to the ABRE of the Em1 gene promoter. Could participate in abscisic acid-regulated gene expression during seed development. In Arabidopsis thaliana (Mouse-ear cress), this protein is ABSCISIC ACID-INSENSITIVE 5-like protein 3 (DPBF4).